A 375-amino-acid chain; its full sequence is Mitogen-activated protein kinase 4a (375 aa).

The Protein kinase domain occupies 39–325; the sequence is KPPLRPIGRG…VEAALAHPYL (287 aa). ATP contacts are provided by residues 45–53 and Lys-68; that span reads IGRGAYGIV. Asp-165 serves as the catalytic Proton acceptor. Thr-197 bears the Phosphothreonine mark. The TXY signature appears at 197–199; sequence TEY. Tyr-199 carries the phosphotyrosine modification.

The protein belongs to the protein kinase superfamily. CMGC Ser/Thr protein kinase family. MAP kinase subfamily. Mg(2+) is required as a cofactor. Post-translationally, dually phosphorylated on Thr-197 and Tyr-199, which activates the enzyme. Phosphorylated in response to pathogen-associated molecular pattern (PAMP) chitin and in response to necrotrophic fungus B.cinerea spores. Not phosphorylated in response to osmotic stress. As to expression, expressed strongly in the apical cells of caulonemal air filaments and rhizoids in fully developed plants and less strongly, but readily detectable in filamentous protonemal tissue at the edge of the plant consisting of both chloronema and caulonema. When filamentous growth of protonema is promoted, the expression is strongest in newly formed apical tip cells of protonemal tissue.

It localises to the cytoplasm. Its subcellular location is the nucleus. It catalyses the reaction L-seryl-[protein] + ATP = O-phospho-L-seryl-[protein] + ADP + H(+). The catalysed reaction is L-threonyl-[protein] + ATP = O-phospho-L-threonyl-[protein] + ADP + H(+). With respect to regulation, activated by threonine and tyrosine phosphorylation. Activated in response to bacterial and fungal pathogen-associated molecular patterns (PAMPs) including chitin, chitosan and peptidyl glycans (PGNs). Activation in response to chitin requires the CERK1, MEKK1a/b, MKK1a/b/c and MPK4a/b signaling pathway. Activated in response to necrotrophic fungus B.cinerea spores. Not activated in response to osmotic stress. The CERK1, MEKK1a/b, MKK1a/b/c and MPK4a/b proteins are involved in pathogen defense. The pathway induces rapid growth inhibition, cell wall depositions and accumulation of defense-related transcripts. This protein is required for innate immunity triggered by pathogen-associated molecular patterns (PAMPs). Involved in resistance to necrotrophic fungi B.cinerea and A.brassicicola. Involved in the transduction of signals from chitosan perception to the activation of defense genes. The chain is Mitogen-activated protein kinase 4a (MPK4a) from Physcomitrium patens (Spreading-leaved earth moss).